Reading from the N-terminus, the 363-residue chain is Putative lipoate-protein ligase A (363 aa).

One can recognise a BPL/LPL catalytic domain in the interval 49 to 229; sequence STAKHCLLLY…CFLLHKSHST (181 aa). ATP contacts are provided by residues R91, 96–99, and K152; that span reads GTVF. K152 contacts (R)-lipoate.

It belongs to the LplA family. In terms of assembly, monomer.

It is found in the cytoplasm. The enzyme catalyses L-lysyl-[lipoyl-carrier protein] + (R)-lipoate + ATP = N(6)-[(R)-lipoyl]-L-lysyl-[lipoyl-carrier protein] + AMP + diphosphate + H(+). It functions in the pathway protein modification; protein lipoylation via exogenous pathway; protein N(6)-(lipoyl)lysine from lipoate: step 1/2. It participates in protein modification; protein lipoylation via exogenous pathway; protein N(6)-(lipoyl)lysine from lipoate: step 2/2. Catalyzes both the ATP-dependent activation of exogenously supplied lipoate to lipoyl-AMP and the transfer of the activated lipoyl onto the lipoyl domains of lipoate-dependent enzymes. The sequence is that of Putative lipoate-protein ligase A (aim22) from Schizosaccharomyces pombe (strain 972 / ATCC 24843) (Fission yeast).